The chain runs to 301 residues: uncharacterized protein (301 aa).

2 disordered regions span residues 56 to 126 (ESPT…ESDL) and 149 to 173 (LSTE…DASS). Over residues 71–82 (VQKENQKPKDLN) the composition is skewed to basic and acidic residues. The span at 93–102 (KNSSGLVSQI) shows a compositional bias: polar residues. Residues 161 to 173 (SNTSSSSMSDASS) are compositionally biased toward low complexity.

This is an uncharacterized protein from Caenorhabditis elegans.